Here is a 526-residue protein sequence, read N- to C-terminus: GMP synthase [glutamine-hydrolyzing] (526 aa).

One can recognise a Glutamine amidotransferase type-1 domain in the interval 13 to 204; that stretch reads TVLVVDFGAQ…LYRGAGLSPD (192 aa). Catalysis depends on Cys-90, which acts as the Nucleophile. Residues His-178 and Glu-180 contribute to the active site. The GMPS ATP-PPase domain occupies 205–400; sequence WTTGNVIEEQ…LGLPDEIVQR (196 aa). 232–238 provides a ligand contact to ATP; sequence SGGVDSA.

Homodimer.

It carries out the reaction XMP + L-glutamine + ATP + H2O = GMP + L-glutamate + AMP + diphosphate + 2 H(+). It functions in the pathway purine metabolism; GMP biosynthesis; GMP from XMP (L-Gln route): step 1/1. In terms of biological role, catalyzes the synthesis of GMP from XMP. The chain is GMP synthase [glutamine-hydrolyzing] (guaA) from Streptomyces coelicolor (strain ATCC BAA-471 / A3(2) / M145).